The primary structure comprises 116 residues: Large ribosomal subunit protein uL18 (116 aa).

The protein belongs to the universal ribosomal protein uL18 family. As to quaternary structure, part of the 50S ribosomal subunit; part of the 5S rRNA/L5/L18/L25 subcomplex. Contacts the 5S and 23S rRNAs.

In terms of biological role, this is one of the proteins that bind and probably mediate the attachment of the 5S RNA into the large ribosomal subunit, where it forms part of the central protuberance. The sequence is that of Large ribosomal subunit protein uL18 from Acinetobacter baylyi (strain ATCC 33305 / BD413 / ADP1).